Reading from the N-terminus, the 101-residue chain is Small ribosomal subunit protein uS14 (101 aa).

The protein belongs to the universal ribosomal protein uS14 family. Part of the 30S ribosomal subunit. Contacts proteins S3 and S10.

Its function is as follows. Binds 16S rRNA, required for the assembly of 30S particles and may also be responsible for determining the conformation of the 16S rRNA at the A site. The polypeptide is Small ribosomal subunit protein uS14 (Beijerinckia indica subsp. indica (strain ATCC 9039 / DSM 1715 / NCIMB 8712)).